The following is a 91-amino-acid chain: Acyl carrier protein (91 aa).

Positions Glu6–Glu81 constitute a Carrier domain. Ser41 is modified (O-(pantetheine 4'-phosphoryl)serine).

It belongs to the acyl carrier protein (ACP) family. Post-translationally, 4'-phosphopantetheine is transferred from CoA to a specific serine of apo-ACP by AcpS. This modification is essential for activity because fatty acids are bound in thioester linkage to the sulfhydryl of the prosthetic group.

The protein localises to the cytoplasm. It functions in the pathway lipid metabolism; fatty acid biosynthesis. In terms of biological role, carrier of the growing fatty acid chain in fatty acid biosynthesis. This Rhodococcus erythropolis (strain PR4 / NBRC 100887) protein is Acyl carrier protein.